Here is a 555-residue protein sequence, read N- to C-terminus: CTP synthase (555 aa).

The interval 1-272 is amidoligase domain; sequence MQPTSTTTKH…DAYVVRKLDL (272 aa). Ser-19 contacts CTP. Residue Ser-19 coordinates UTP. ATP-binding positions include 20 to 25 and Asp-77; that span reads SLGKGL. The Mg(2+) site is built by Asp-77 and Glu-146. CTP is bound by residues 153–155, 193–198, and Lys-229; these read DIE and KTKPTQ. UTP-binding positions include 193 to 198 and Lys-229; that span reads KTKPTQ. The 252-residue stretch at 297-548 folds into the Glutamine amidotransferase type-1 domain; that stretch reads TVALVGKYID…VKAAVARQVA (252 aa). An L-glutamine-binding site is contributed by Gly-360. The Nucleophile; for glutamine hydrolysis role is filled by Cys-387. L-glutamine-binding positions include 388 to 391, Glu-411, and Arg-473; that span reads LGLQ. Active-site residues include His-521 and Glu-523.

It belongs to the CTP synthase family. In terms of assembly, homotetramer.

The enzyme catalyses UTP + L-glutamine + ATP + H2O = CTP + L-glutamate + ADP + phosphate + 2 H(+). The catalysed reaction is L-glutamine + H2O = L-glutamate + NH4(+). It carries out the reaction UTP + NH4(+) + ATP = CTP + ADP + phosphate + 2 H(+). It participates in pyrimidine metabolism; CTP biosynthesis via de novo pathway; CTP from UDP: step 2/2. With respect to regulation, allosterically activated by GTP, when glutamine is the substrate; GTP has no effect on the reaction when ammonia is the substrate. The allosteric effector GTP functions by stabilizing the protein conformation that binds the tetrahedral intermediate(s) formed during glutamine hydrolysis. Inhibited by the product CTP, via allosteric rather than competitive inhibition. Its function is as follows. Catalyzes the ATP-dependent amination of UTP to CTP with either L-glutamine or ammonia as the source of nitrogen. Regulates intracellular CTP levels through interactions with the four ribonucleotide triphosphates. This is CTP synthase from Streptomyces griseus subsp. griseus (strain JCM 4626 / CBS 651.72 / NBRC 13350 / KCC S-0626 / ISP 5235).